A 601-amino-acid chain; its full sequence is Secretogranin-2 (601 aa).

The N-terminal stretch at 1–30 is a signal peptide; the sequence is MSSQRNYCLAGCLSSCILVILMSFSDAASF. Residues 89–109 form a disordered region; it reads EQKDTQALSTDTAKSPTSDDE. Polar residues predominate over residues 93 to 104; sequence TQALSTDTAKSP. Tyr-151 is subject to Sulfotyrosine. Positions 258–273 are enriched in basic and acidic residues; that stretch reads VESQTQEELKESKEEV. The interval 258–307 is disordered; that stretch reads VESQTQEELKESKEEVEKTDDMEDEIKRSGLLGLQDEEPEKDTKEQESEN.

The protein belongs to the chromogranin/secretogranin protein family.

Its subcellular location is the secreted. Functionally, neuroendocrine protein of the granin family that regulates the biogenesis of secretory granules. The sequence is that of Secretogranin-2 from Pelophylax ridibundus (Marsh frog).